The sequence spans 590 residues: Ankyrin repeat domain-containing protein 13A (590 aa).

ANK repeat units lie at residues arginine 40–lysine 69 and glutamine 73–threonine 102. Serine 205 is modified (phosphoserine). UIM domains follow at residues glutamate 483–serine 502, threonine 519–glycine 538, arginine 549–tryptophan 568, and glutamate 574–lysine 590. Residue serine 586 is modified to Phosphoserine.

Interacts (via the UIM 3 and 4 repeats) with EGFR (ubiquitinated); the interaction is direct, inhibited by ANKRD13A monoubiquitination and may regulate EGFR internalization. Post-translationally, monoubiquitinated, inhibits interaction with ubiquitinated EGFR.

It localises to the cell membrane. Its subcellular location is the late endosome. Ubiquitin-binding protein that specifically recognizes and binds 'Lys-63'-linked ubiquitin. Does not bind 'Lys-48'-linked ubiquitin. Positively regulates the internalization of ligand-activated EGFR by binding to the Ub moiety of ubiquitinated EGFR at the cell membrane. In Homo sapiens (Human), this protein is Ankyrin repeat domain-containing protein 13A (ANKRD13A).